We begin with the raw amino-acid sequence, 292 residues long: Elongation factor Ts (292 aa).

Residues 81–84 (TDFV) are involved in Mg(2+) ion dislocation from EF-Tu.

It belongs to the EF-Ts family.

It localises to the cytoplasm. Associates with the EF-Tu.GDP complex and induces the exchange of GDP to GTP. It remains bound to the aminoacyl-tRNA.EF-Tu.GTP complex up to the GTP hydrolysis stage on the ribosome. The sequence is that of Elongation factor Ts from Alkalilimnicola ehrlichii (strain ATCC BAA-1101 / DSM 17681 / MLHE-1).